The sequence spans 357 residues: Protein RecA (357 aa).

73 to 80 (GPESSGKT) provides a ligand contact to ATP.

It belongs to the RecA family.

It localises to the cytoplasm. In terms of biological role, can catalyze the hydrolysis of ATP in the presence of single-stranded DNA, the ATP-dependent uptake of single-stranded DNA by duplex DNA, and the ATP-dependent hybridization of homologous single-stranded DNAs. It interacts with LexA causing its activation and leading to its autocatalytic cleavage. This chain is Protein RecA, found in Nitratidesulfovibrio vulgaris (strain ATCC 29579 / DSM 644 / CCUG 34227 / NCIMB 8303 / VKM B-1760 / Hildenborough) (Desulfovibrio vulgaris).